The primary structure comprises 79 residues: Small ribosomal subunit protein bS18 (79 aa).

It belongs to the bacterial ribosomal protein bS18 family. In terms of assembly, part of the 30S ribosomal subunit. Forms a tight heterodimer with protein bS6.

Functionally, binds as a heterodimer with protein bS6 to the central domain of the 16S rRNA, where it helps stabilize the platform of the 30S subunit. This chain is Small ribosomal subunit protein bS18, found in Ureaplasma parvum serovar 3 (strain ATCC 27815 / 27 / NCTC 11736).